Here is a 176-residue protein sequence, read N- to C-terminus: Ribosome maturation factor RimM (176 aa).

Positions 97-176 constitute a PRC barrel domain; sequence DSEFYHRDLI…QILVDWDPDF (80 aa).

It belongs to the RimM family. Binds ribosomal protein uS19.

It is found in the cytoplasm. In terms of biological role, an accessory protein needed during the final step in the assembly of 30S ribosomal subunit, possibly for assembly of the head region. Essential for efficient processing of 16S rRNA. May be needed both before and after RbfA during the maturation of 16S rRNA. It has affinity for free ribosomal 30S subunits but not for 70S ribosomes. This chain is Ribosome maturation factor RimM, found in Shewanella frigidimarina (strain NCIMB 400).